The following is a 74-amino-acid chain: uncharacterized protein (74 aa).

This is an uncharacterized protein from Acidianus hospitalis (AFV-1).